The sequence spans 211 residues: Large ribosomal subunit protein uL3 (211 aa).

Residues 135 to 155 are disordered; the sequence is THGNSLSHRAPGSIGQNQSPG. An N5-methylglutamine modification is found at Gln152.

The protein belongs to the universal ribosomal protein uL3 family. In terms of assembly, part of the 50S ribosomal subunit. Forms a cluster with proteins L14 and L19. Post-translationally, methylated by PrmB.

One of the primary rRNA binding proteins, it binds directly near the 3'-end of the 23S rRNA, where it nucleates assembly of the 50S subunit. This is Large ribosomal subunit protein uL3 from Pseudoalteromonas translucida (strain TAC 125).